The following is a 223-amino-acid chain: Rab-like protein 2A (223 aa).

GTP is bound by residues 28 to 35 (GDSAVGKS), 76 to 80 (DTAGQ), and 133 to 136 (NKID). The disordered stretch occupies residues 200–223 (KLEQKEEDTSGQEQSDTTKSPSPS). Residues 210 to 223 (GQEQSDTTKSPSPS) are compositionally biased toward polar residues.

It belongs to the small GTPase superfamily. Rab family. In terms of assembly, interacts with IFT27, IFT81, IFT172, ATP6V1E1, HK1, LDHC, MAPRE1 and HSPA2. In terms of tissue distribution, isoform 2 is expressed in the testis and localizes to the mid-piece of the sperm tail (at protein level). Isoform 2 is expressed at higher levels in testis than isoform 1. Isoform 1 and isoform 2 are widely expressed and notably within other tissues containing motile cilia including the lung, trachea, brain, ovary and kidney.

Plays an essential role in male fertility, sperm intra-flagellar transport, and tail assembly. Binds, in a GTP-regulated manner, to a specific set of effector proteins including key proteins involved in cilia development and function and delivers them into the growing sperm tail. The protein is Rab-like protein 2A (Rabl2) of Mus musculus (Mouse).